Here is a 410-residue protein sequence, read N- to C-terminus: Acetate kinase (410 aa).

Residue Asn-7 coordinates Mg(2+). Residue Lys-14 coordinates ATP. Arg-88 contributes to the substrate binding site. The active-site Proton donor/acceptor is Asp-145. ATP contacts are provided by residues 203–207, 278–280, and 326–330; these read HAGNG, DTR, and GIGEN. Glu-379 serves as a coordination point for Mg(2+).

The protein belongs to the acetokinase family. As to quaternary structure, homodimer. The cofactor is Mg(2+). Mn(2+) is required as a cofactor.

The protein resides in the cytoplasm. It catalyses the reaction acetate + ATP = acetyl phosphate + ADP. Its pathway is metabolic intermediate biosynthesis; acetyl-CoA biosynthesis; acetyl-CoA from acetate: step 1/2. In terms of biological role, catalyzes the formation of acetyl phosphate from acetate and ATP. Can also catalyze the reverse reaction. The protein is Acetate kinase of Chlorante-Aster yellows phytoplasma.